A 312-amino-acid polypeptide reads, in one-letter code: Pyridoxal kinase (312 aa).

M1 is modified (N-acetylmethionine). The pyridoxal site is built by S12 and T47. A pyridoxal 5'-phosphate-binding site is contributed by T47. Residue S59 is modified to Phosphoserine. D113 contributes to the ATP binding site. Position 113 (D113) interacts with Na(+). D118 lines the Mg(2+) pocket. Residue T148 participates in Na(+) binding. ATP is bound by residues 150–153 (NQFE) and 186–187 (TS). T186 provides a ligand contact to Na(+). The residue at position 213 (S213) is a Phosphoserine. Residues 226 to 228 (VDA) and T233 contribute to the ATP site. 234-235 (GD) contributes to the pyridoxal 5'-phosphate binding site. D235 (proton acceptor) is an active-site residue. S285 is subject to Phosphoserine.

It belongs to the pyridoxine kinase family. Homodimer. Zn(2+) serves as cofactor. Requires Mg(2+) as cofactor.

The protein resides in the cytoplasm. Its subcellular location is the cytosol. The enzyme catalyses pyridoxal + ATP = pyridoxal 5'-phosphate + ADP + H(+). It carries out the reaction pyridoxamine + ATP = pyridoxamine 5'-phosphate + ADP + H(+). The catalysed reaction is pyridoxine + ATP = pyridoxine 5'-phosphate + ADP + H(+). It functions in the pathway cofactor metabolism; pyridoxal 5'-phosphate salvage; pyridoxal 5'-phosphate from pyridoxal: step 1/1. It participates in cofactor metabolism; pyridoxal 5'-phosphate salvage; pyridoxine 5'-phosphate from pyridoxine: step 1/1. Its pathway is cofactor metabolism; pyridoxal 5'-phosphate salvage; pyridoxamine 5'-phosphate from pyridoxamine: step 1/1. Activity is increased in the presence of K(+)or Na(+). Catalyzes the phosphorylation of the dietary vitamin B6 vitamers pyridoxal (PL), pyridoxine (PN) and pyridoxamine (PM) to form pyridoxal 5'-phosphate (PLP), pyridoxine 5'-phosphate (PNP) and pyridoxamine 5'-phosphate (PMP), respectively. PLP is the active form of vitamin B6, and acts as a cofactor for over 140 different enzymatic reactions. The sequence is that of Pyridoxal kinase (PDXK) from Bos taurus (Bovine).